The chain runs to 630 residues: tRNA uridine 5-carboxymethylaminomethyl modification enzyme MnmG (630 aa).

Position 13-18 (13-18 (GGGHAG)) interacts with FAD. 273–287 (GPRYCPSIEDKIHRF) serves as a coordination point for NAD(+).

Belongs to the MnmG family. As to quaternary structure, homodimer. Heterotetramer of two MnmE and two MnmG subunits. The cofactor is FAD.

It localises to the cytoplasm. In terms of biological role, NAD-binding protein involved in the addition of a carboxymethylaminomethyl (cmnm) group at the wobble position (U34) of certain tRNAs, forming tRNA-cmnm(5)s(2)U34. In Pseudomonas aeruginosa (strain LESB58), this protein is tRNA uridine 5-carboxymethylaminomethyl modification enzyme MnmG.